Reading from the N-terminus, the 475-residue chain is tRNA modification GTPase MnmE (475 aa).

(6S)-5-formyl-5,6,7,8-tetrahydrofolate-binding residues include R32, E97, and K136. The 165-residue stretch at 232–396 (GVATVIAGRP…LKSRMSSMVE (165 aa)) folds into the TrmE-type G domain. GTP is bound by residues 242-247 (NAGKST), 261-267 (SHMPGTT), 286-289 (DTAG), and 377-379 (SAR). Mg(2+) contacts are provided by S246 and T267. Residue K475 participates in (6S)-5-formyl-5,6,7,8-tetrahydrofolate binding.

This sequence belongs to the TRAFAC class TrmE-Era-EngA-EngB-Septin-like GTPase superfamily. TrmE GTPase family. As to quaternary structure, homodimer. Heterotetramer of two MnmE and two MnmG subunits. It depends on K(+) as a cofactor.

The protein localises to the cytoplasm. Its function is as follows. Exhibits a very high intrinsic GTPase hydrolysis rate. Involved in the addition of a carboxymethylaminomethyl (cmnm) group at the wobble position (U34) of certain tRNAs, forming tRNA-cmnm(5)s(2)U34. This Chlorobium phaeobacteroides (strain DSM 266 / SMG 266 / 2430) protein is tRNA modification GTPase MnmE.